Consider the following 403-residue polypeptide: Alpha-1-antiproteinase F (403 aa).

The first 22 residues, 1 to 22, serve as a signal peptide directing secretion; that stretch reads SAIPRGLLLLAGLCCLVFGIMA. N-linked (GlcNAc...) asparagine glycosylation is found at N55, N92, N155, N222, and N256. An RCL region spans residues 358 to 377; it reads GATELEITPHSVPQDLFFNK.

This sequence belongs to the serpin family.

The protein resides in the secreted. Inhibits elastase, chymotrypsin, cathepsin G, plasmin, and trypsin. The protein is Alpha-1-antiproteinase F of Cavia porcellus (Guinea pig).